The sequence spans 359 residues: Peptide chain release factor 1 (359 aa).

The residue at position 233 (Gln233) is an N5-methylglutamine.

It belongs to the prokaryotic/mitochondrial release factor family. Post-translationally, methylated by PrmC. Methylation increases the termination efficiency of RF1.

It localises to the cytoplasm. Functionally, peptide chain release factor 1 directs the termination of translation in response to the peptide chain termination codons UAG and UAA. The chain is Peptide chain release factor 1 from Ruminiclostridium cellulolyticum (strain ATCC 35319 / DSM 5812 / JCM 6584 / H10) (Clostridium cellulolyticum).